A 183-amino-acid polypeptide reads, in one-letter code: Probable apo-citrate lyase phosphoribosyl-dephospho-CoA transferase (183 aa).

The protein belongs to the CitX family.

It carries out the reaction apo-[citrate lyase ACP] + 2'-(5''-triphospho-alpha-D-ribosyl)-3'-dephospho-CoA = holo-[citrate lyase ACP] + diphosphate. Functionally, transfers 2-(5''-triphosphoribosyl)-3'-dephosphocoenzyme-A on a serine residue to the apo-acyl carrier protein (gamma chain) of the citrate lyase to yield holo-acyl carrier protein. This Escherichia coli (strain 55989 / EAEC) protein is Probable apo-citrate lyase phosphoribosyl-dephospho-CoA transferase.